The sequence spans 98 residues: NADH-ubiquinone oxidoreductase chain 4L (98 aa).

Helical transmembrane passes span 1-21, 29-49, and 61-81; these read MTLIHMNVLMAFSMSLVGLLM, ALLCLEGMMLSLFTLAALTIL, and IILLVFAACEAAIGLALLVMV.

It belongs to the complex I subunit 4L family. Core subunit of respiratory chain NADH dehydrogenase (Complex I) which is composed of 45 different subunits.

The protein resides in the mitochondrion inner membrane. The enzyme catalyses a ubiquinone + NADH + 5 H(+)(in) = a ubiquinol + NAD(+) + 4 H(+)(out). Core subunit of the mitochondrial membrane respiratory chain NADH dehydrogenase (Complex I) which catalyzes electron transfer from NADH through the respiratory chain, using ubiquinone as an electron acceptor. Part of the enzyme membrane arm which is embedded in the lipid bilayer and involved in proton translocation. The chain is NADH-ubiquinone oxidoreductase chain 4L (MT-ND4L) from Balaenoptera borealis (Sei whale).